Here is a 790-residue protein sequence, read N- to C-terminus: Solute carrier family 26 member 9 (790 aa).

Topologically, residues M1–Y70 are cytoplasmic. Residues I71–A96 form a helical membrane-spanning segment. Residues N97–A100 lie on the Extracellular side of the membrane. The helical transmembrane segment at V101 to F109 threads the bilayer. Residues P110–A129 lie on the Cytoplasmic side of the membrane. A helical transmembrane segment spans residues V130–L142. Residues A143 to T162 lie on the Extracellular side of the membrane. The chain crosses the membrane as a helical span at residues A163–Q191. Residues F192–E201 are Cytoplasmic-facing. The chain crosses the membrane as a helical span at residues S202–F224. The Extracellular segment spans residues G225–I237. The segment at residues V238–K246 is an intramembrane region (helical). The Extracellular portion of the chain corresponds to N247–A254. The chain crosses the membrane as a helical span at residues S255 to R275. The Cytoplasmic segment spans residues Y276–T286. Residues E287–G299 form a helical membrane-spanning segment. Over S300–V334 the chain is Extracellular. Residues G335–K358 form a helical membrane-spanning segment. Residues H359–S365 are Cytoplasmic-facing. A helical membrane pass occupies residues N366 to G379. Topologically, residues S380–A390 are extracellular. Residues L391–A400 form a helical membrane-spanning segment. Residues G401–Q405 lie on the Cytoplasmic side of the membrane. Residues V406 to M419 traverse the membrane as a helical segment. Residues L420–K431 lie on the Extracellular side of the membrane. Residues A432–R457 form a helical membrane-spanning segment. Residues K458–L461 are Cytoplasmic-facing. Residues D462–L476 form a helical membrane-spanning segment. Topologically, residues S477–P479 are extracellular. A helical transmembrane segment spans residues Y480–Q498. Residues F499–L790 lie on the Cytoplasmic side of the membrane. The 219-residue stretch at T519 to A737 folds into the STAS domain.

Belongs to the SLC26A/SulP transporter (TC 2.A.53) family. As to quaternary structure, homodimer. As to expression, expressed in stomach and trachea. Abundantly expressed in the apical domain of the surface epithelial cells and the deep cells in the gastric gland. Also expressed in heart, brain, lung and liver.

The protein resides in the cell membrane. Its subcellular location is the endomembrane system. It catalyses the reaction chloride(in) = chloride(out). The catalysed reaction is hydrogencarbonate(in) + chloride(out) = hydrogencarbonate(out) + chloride(in). With respect to regulation, inhibited by ammonium and thiosulfate. In terms of biological role, ion transporter that can act both as an ion channel and anion exchanger. Mainly acts as a chloride channel, which mediate uncoupled chloride anion transport in an alternate-access mechanism where a saturable binding site is alternately exposed to either one or the other side of the membrane. Also acts as a DIDS- and thiosulfate- sensitive anion exchanger the exchange of chloride for bicarbonate ions across the cell membrane. In Mus musculus (Mouse), this protein is Solute carrier family 26 member 9.